The primary structure comprises 325 residues: MIKLLYPKFWQKRNIIAYLLLPIGLIYKFLGYLRDSLARPIMLPAKVICVGNCSVGGTGKTQIVMYLAKLLRAKNVSFVIVTKAYGSNLKSATTIHPGHTALEVGDEGVILAKYGTVIATKNIKEILPLINELKPDIIIIDDFLQNPYFYKDFTIVSVDSQRLFGNGFLIPAGPLRQDPNKALDAADLIFLVSSTNDKIPNILTPYVNKVISAQIVPSNNIDKTKNYFAFSGIGNPERFFSTLKNYGLNITGYKIFPDHYNYLQEDLENLYSLAKEHNTTLITTRKDHIKFNDLNNNIVCLDVELSINNHDLLNEKIFKKAQIFN.

54 to 61 is an ATP binding site; sequence SVGGTGKT.

Belongs to the LpxK family.

It carries out the reaction a lipid A disaccharide + ATP = a lipid IVA + ADP + H(+). Its pathway is glycolipid biosynthesis; lipid IV(A) biosynthesis; lipid IV(A) from (3R)-3-hydroxytetradecanoyl-[acyl-carrier-protein] and UDP-N-acetyl-alpha-D-glucosamine: step 6/6. Transfers the gamma-phosphate of ATP to the 4'-position of a tetraacyldisaccharide 1-phosphate intermediate (termed DS-1-P) to form tetraacyldisaccharide 1,4'-bis-phosphate (lipid IVA). This Rickettsia akari (strain Hartford) protein is Tetraacyldisaccharide 4'-kinase.